Reading from the N-terminus, the 235-residue chain is Small ribosomal subunit protein uS3 (235 aa).

The region spanning 39-107 (IRDFIKKECH…ELHLNIVEVR (69 aa)) is the KH type-2 domain. Residues 213–235 (AARDRKAQELQDGPAPRGAGGRR) form a disordered region.

Belongs to the universal ribosomal protein uS3 family. Part of the 30S ribosomal subunit. Forms a tight complex with proteins S10 and S14.

In terms of biological role, binds the lower part of the 30S subunit head. Binds mRNA in the 70S ribosome, positioning it for translation. The chain is Small ribosomal subunit protein uS3 from Roseobacter denitrificans (strain ATCC 33942 / OCh 114) (Erythrobacter sp. (strain OCh 114)).